The following is a 238-amino-acid chain: Ribose-5-phosphate isomerase A (238 aa).

Substrate-binding positions include 30–33 (SGST), 87–90 (DGAD), and 100–103 (KGGG). The active-site Proton acceptor is the Glu-109. Lys-127 serves as a coordination point for substrate.

It belongs to the ribose 5-phosphate isomerase family. In terms of assembly, homodimer.

It catalyses the reaction aldehydo-D-ribose 5-phosphate = D-ribulose 5-phosphate. It functions in the pathway carbohydrate degradation; pentose phosphate pathway; D-ribose 5-phosphate from D-ribulose 5-phosphate (non-oxidative stage): step 1/1. Functionally, catalyzes the reversible conversion of ribose-5-phosphate to ribulose 5-phosphate. The sequence is that of Ribose-5-phosphate isomerase A from Synechococcus sp. (strain CC9311).